Here is a 334-residue protein sequence, read N- to C-terminus: Nucleoid-associated protein YPK_2796 (334 aa).

The protein belongs to the YejK family.

The protein localises to the cytoplasm. The protein resides in the nucleoid. The chain is Nucleoid-associated protein YPK_2796 from Yersinia pseudotuberculosis serotype O:3 (strain YPIII).